The primary structure comprises 254 residues: 3-deoxy-manno-octulosonate cytidylyltransferase (254 aa).

This sequence belongs to the KdsB family.

It localises to the cytoplasm. It carries out the reaction 3-deoxy-alpha-D-manno-oct-2-ulosonate + CTP = CMP-3-deoxy-beta-D-manno-octulosonate + diphosphate. It functions in the pathway nucleotide-sugar biosynthesis; CMP-3-deoxy-D-manno-octulosonate biosynthesis; CMP-3-deoxy-D-manno-octulosonate from 3-deoxy-D-manno-octulosonate and CTP: step 1/1. The protein operates within bacterial outer membrane biogenesis; lipopolysaccharide biosynthesis. Its function is as follows. Activates KDO (a required 8-carbon sugar) for incorporation into bacterial lipopolysaccharide in Gram-negative bacteria. The chain is 3-deoxy-manno-octulosonate cytidylyltransferase from Pseudomonas paraeruginosa (strain DSM 24068 / PA7) (Pseudomonas aeruginosa (strain PA7)).